The following is a 917-amino-acid chain: Phosphoenolpyruvate carboxylase (917 aa).

Active-site residues include His145 and Lys578.

The protein belongs to the PEPCase type 1 family. Mg(2+) is required as a cofactor.

The enzyme catalyses oxaloacetate + phosphate = phosphoenolpyruvate + hydrogencarbonate. Its function is as follows. Forms oxaloacetate, a four-carbon dicarboxylic acid source for the tricarboxylic acid cycle. The chain is Phosphoenolpyruvate carboxylase from Azoarcus sp. (strain BH72).